Here is a 157-residue protein sequence, read N- to C-terminus: Arginine repressor (157 aa).

It belongs to the ArgR family.

The protein resides in the cytoplasm. It functions in the pathway amino-acid biosynthesis; L-arginine biosynthesis [regulation]. Its function is as follows. Regulates arginine biosynthesis genes. The sequence is that of Arginine repressor from Bacteroides thetaiotaomicron (strain ATCC 29148 / DSM 2079 / JCM 5827 / CCUG 10774 / NCTC 10582 / VPI-5482 / E50).